A 363-amino-acid polypeptide reads, in one-letter code: UDP-N-acetylglucosamine--N-acetylmuramyl-(pentapeptide) pyrophosphoryl-undecaprenol N-acetylglucosamine transferase (363 aa).

Residues 15-17, asparagine 127, arginine 163, serine 191, isoleucine 244, 263-268, and glutamine 288 each bind UDP-N-acetyl-alpha-D-glucosamine; these read TGG and ALTVSE.

Belongs to the glycosyltransferase 28 family. MurG subfamily.

It is found in the cell inner membrane. It carries out the reaction di-trans,octa-cis-undecaprenyl diphospho-N-acetyl-alpha-D-muramoyl-L-alanyl-D-glutamyl-meso-2,6-diaminopimeloyl-D-alanyl-D-alanine + UDP-N-acetyl-alpha-D-glucosamine = di-trans,octa-cis-undecaprenyl diphospho-[N-acetyl-alpha-D-glucosaminyl-(1-&gt;4)]-N-acetyl-alpha-D-muramoyl-L-alanyl-D-glutamyl-meso-2,6-diaminopimeloyl-D-alanyl-D-alanine + UDP + H(+). Its pathway is cell wall biogenesis; peptidoglycan biosynthesis. Cell wall formation. Catalyzes the transfer of a GlcNAc subunit on undecaprenyl-pyrophosphoryl-MurNAc-pentapeptide (lipid intermediate I) to form undecaprenyl-pyrophosphoryl-MurNAc-(pentapeptide)GlcNAc (lipid intermediate II). The protein is UDP-N-acetylglucosamine--N-acetylmuramyl-(pentapeptide) pyrophosphoryl-undecaprenol N-acetylglucosamine transferase of Pectobacterium carotovorum subsp. carotovorum (strain PC1).